Here is a 222-residue protein sequence, read N- to C-terminus: PKHD-type hydroxylase P9301_13621 (222 aa).

The Fe2OG dioxygenase domain maps to 81-175; sequence KIHGIMFTKS…RLVCVGWIES (95 aa). Positions 99, 101, and 156 each coordinate Fe cation. Arg-166 provides a ligand contact to 2-oxoglutarate.

Fe(2+) is required as a cofactor. The cofactor is L-ascorbate.

The sequence is that of PKHD-type hydroxylase P9301_13621 from Prochlorococcus marinus (strain MIT 9301).